Reading from the N-terminus, the 946-residue chain is Protein RRC1 (946 aa).

Disordered regions lie at residues 1–29 and 41–183; these read MSSF…KAED and SFQG…NLYV. Composition is skewed to basic and acidic residues over residues 15-29, 62-75, and 98-147; these read KHRE…KAED, DKPK…KSKD, and KGKE…DRQG. An RRM domain is found at 179 to 260; that stretch reads TNLYVGNLSP…YELKIGWGKA (82 aa). An SURP motif repeat occupies 329-372; it reads VIDTLALYVLDGECAFEQAIMERGRGNPLFKFMFELGSKEHTYY. Residues 437–582 enclose the CID domain; sequence LTDPQRDEFE…GLRSTFLRSG (146 aa). In terms of domain architecture, SAP spans 631–665; that stretch reads LMNLPIAELERRCRHNGLSLVGGRVMMVTRLLSLE. 2 disordered regions span residues 740–797 and 836–946; these read ASKW…EQRQ and EVDY…RGTR. Residues 757–767 are compositionally biased toward polar residues; sequence SSSSGSDNTGG. Composition is skewed to basic and acidic residues over residues 772 to 781, 854 to 868, and 886 to 946; these read ADGEDLKGND, IIER…QESS, and STRE…RGTR.

In terms of assembly, component of the SWAP1-SFPS-RRC1 splicing factor complex which modulates pre-mRNA splicing to promote photomorphogenesis. Interacts with SWAP1 in a light-independent manner. Expressed in leaves, inflorescence stems, roots, flower buds, open flowers and siliques.

Its subcellular location is the nucleus speckle. Functionally, as a member of the SWAP1-SFPS-RRC1 splicing factor complex, modulates photomorphogenesis by regulating the gene expression and pre-messenger RNA (mRNA) alternative splicing of a large number of genes, including those involved in plant responses to light signaling. SR-like splicing factor required for phytochrome B (phyB) signal transduction and involved in phyB-dependent alternative splicing. The sequence is that of Protein RRC1 from Arabidopsis thaliana (Mouse-ear cress).